Reading from the N-terminus, the 305-residue chain is NAD kinase 2 (305 aa).

Asp78 functions as the Proton acceptor in the catalytic mechanism. NAD(+) is bound by residues 78–79 (DG), 152–153 (NE), Asp182, 193–198 (TAYSLS), and Asn251.

It belongs to the NAD kinase family. It depends on a divalent metal cation as a cofactor.

It is found in the cytoplasm. The catalysed reaction is NAD(+) + ATP = ADP + NADP(+) + H(+). Its function is as follows. Involved in the regulation of the intracellular balance of NAD and NADP, and is a key enzyme in the biosynthesis of NADP. Catalyzes specifically the phosphorylation on 2'-hydroxyl of the adenosine moiety of NAD to yield NADP. The sequence is that of NAD kinase 2 from Synechococcus sp. (strain ATCC 27144 / PCC 6301 / SAUG 1402/1) (Anacystis nidulans).